The sequence spans 539 residues: Alpha-aminoadipic semialdehyde dehydrogenase (539 aa).

The transit peptide at 1 to 26 directs the protein to the mitochondrion; the sequence is MLRLARPLCVQTVKASKLSRLWSRPA. An N6-acetyllysine; alternate mark is found at lysine 86, lysine 94, and lysine 97. 3 positions are modified to N6-succinyllysine; alternate: lysine 86, lysine 94, and lysine 97. Residues 192–194, lysine 218, 258–259, 274–275, 274–279, and 296–297 contribute to the NAD(+) site; these read TAF, GT, GS, GSTQVG, and EL. Glutamate 296 acts as the Proton acceptor in catalysis. The Nucleophile role is filled by cysteine 330. Position 331 (threonine 331) interacts with (S)-2-amino-6-oxohexanoate. Position 427 (glutamate 427) interacts with NAD(+). An N6-acetyllysine modification is found at lysine 462. Glycine 489 and alanine 490 together coordinate (S)-2-amino-6-oxohexanoate. Position 500 is an N6-acetyllysine (lysine 500). Residue lysine 537 is modified to N6-succinyllysine.

Belongs to the aldehyde dehydrogenase family. Homotetramer. As to expression, abundant in kidney, liver, cochlea and outer hair cells but not inner hair cells or vestibular type I hair cells. Very low levels in lung, brain, intestine and pancreas.

The protein resides in the cytoplasm. It is found in the cytosol. The protein localises to the nucleus. Its subcellular location is the mitochondrion. The enzyme catalyses nonanal + NAD(+) + H2O = nonanoate + NADH + 2 H(+). The catalysed reaction is (S)-2-amino-6-oxohexanoate + NAD(+) + H2O = L-2-aminoadipate + NADH + 2 H(+). It catalyses the reaction betaine aldehyde + NAD(+) + H2O = glycine betaine + NADH + 2 H(+). It carries out the reaction an aldehyde + NAD(+) + H2O = a carboxylate + NADH + 2 H(+). The enzyme catalyses hexanal + NAD(+) + H2O = hexanoate + NADH + 2 H(+). The catalysed reaction is octanal + NAD(+) + H2O = octanoate + NADH + 2 H(+). It catalyses the reaction (E)-non-2-enal + NAD(+) + H2O = (E)-non-2-enoate + NADH + 2 H(+). It carries out the reaction (E)-4-hydroxynon-2-enal + NAD(+) + H2O = (E)-4-hydroxynon-2-enoate + NADH + 2 H(+). Its pathway is amine and polyamine biosynthesis; betaine biosynthesis via choline pathway; betaine from betaine aldehyde: step 1/1. Multifunctional enzyme mediating important protective effects. Metabolizes betaine aldehyde to betaine, an important cellular osmolyte and methyl donor. Protects cells from oxidative stress by metabolizing a number of lipid peroxidation-derived aldehydes. Involved in lysine catabolism. The sequence is that of Alpha-aminoadipic semialdehyde dehydrogenase from Rattus norvegicus (Rat).